We begin with the raw amino-acid sequence, 295 residues long: 4-diphosphocytidyl-2-C-methyl-D-erythritol kinase (295 aa).

The active site involves Lys-25. 108 to 118 contributes to the ATP binding site; it reads PMGSGLGGGSS. The active site involves Asp-150.

It belongs to the GHMP kinase family. IspE subfamily.

The enzyme catalyses 4-CDP-2-C-methyl-D-erythritol + ATP = 4-CDP-2-C-methyl-D-erythritol 2-phosphate + ADP + H(+). It participates in isoprenoid biosynthesis; isopentenyl diphosphate biosynthesis via DXP pathway; isopentenyl diphosphate from 1-deoxy-D-xylulose 5-phosphate: step 3/6. Functionally, catalyzes the phosphorylation of the position 2 hydroxy group of 4-diphosphocytidyl-2C-methyl-D-erythritol. In Pasteurella multocida (strain Pm70), this protein is 4-diphosphocytidyl-2-C-methyl-D-erythritol kinase.